Reading from the N-terminus, the 164-residue chain is Dihydrofolate reductase (164 aa).

The DHFR domain occupies 2 to 162 (NISIIVAMSQ…FYVTFKILKK (161 aa)). A substrate-binding site is contributed by 6 to 8 (IVA). NADP(+) is bound by residues 7-8 (VA) and 15-20 (IGQKNS). Asp28 contributes to the substrate binding site. 44 to 47 (GRKT) is a binding site for NADP(+). Residue Arg58 participates in substrate binding. NADP(+)-binding positions include 63 to 66 (LTRQ) and 96 to 101 (IGGSNL). Residue Thr115 coordinates substrate.

The protein belongs to the dihydrofolate reductase family.

It carries out the reaction (6S)-5,6,7,8-tetrahydrofolate + NADP(+) = 7,8-dihydrofolate + NADPH + H(+). Its pathway is cofactor biosynthesis; tetrahydrofolate biosynthesis; 5,6,7,8-tetrahydrofolate from 7,8-dihydrofolate: step 1/1. Its function is as follows. Key enzyme in folate metabolism. Catalyzes an essential reaction for de novo glycine and purine synthesis, and for DNA precursor synthesis. This chain is Dihydrofolate reductase (folA), found in Buchnera aphidicola subsp. Baizongia pistaciae (strain Bp).